Consider the following 409-residue polypeptide: Gamma-glutamyl phosphate reductase (409 aa).

Belongs to the gamma-glutamyl phosphate reductase family.

Its subcellular location is the cytoplasm. The enzyme catalyses L-glutamate 5-semialdehyde + phosphate + NADP(+) = L-glutamyl 5-phosphate + NADPH + H(+). Its pathway is amino-acid biosynthesis; L-proline biosynthesis; L-glutamate 5-semialdehyde from L-glutamate: step 2/2. Catalyzes the NADPH-dependent reduction of L-glutamate 5-phosphate into L-glutamate 5-semialdehyde and phosphate. The product spontaneously undergoes cyclization to form 1-pyrroline-5-carboxylate. The chain is Gamma-glutamyl phosphate reductase from Bartonella tribocorum (strain CIP 105476 / IBS 506).